Here is a 259-residue protein sequence, read N- to C-terminus: Adenosylcobinamide-GDP ribazoletransferase (259 aa).

Transmembrane regions (helical) follow at residues 9–29 (NLFF…WIEV), 43–63 (LVGL…LYWV), 64–84 (SPSV…GGFH), 118–138 (ALAL…LALF), 143–163 (VSLA…SFIF), and 196–216 (VLAL…GLVI).

It belongs to the CobS family. Mg(2+) serves as cofactor.

The protein localises to the cell inner membrane. The catalysed reaction is alpha-ribazole + adenosylcob(III)inamide-GDP = adenosylcob(III)alamin + GMP + H(+). The enzyme catalyses alpha-ribazole 5'-phosphate + adenosylcob(III)inamide-GDP = adenosylcob(III)alamin 5'-phosphate + GMP + H(+). Its pathway is cofactor biosynthesis; adenosylcobalamin biosynthesis; adenosylcobalamin from cob(II)yrinate a,c-diamide: step 7/7. Functionally, joins adenosylcobinamide-GDP and alpha-ribazole to generate adenosylcobalamin (Ado-cobalamin). Also synthesizes adenosylcobalamin 5'-phosphate from adenosylcobinamide-GDP and alpha-ribazole 5'-phosphate. The sequence is that of Adenosylcobinamide-GDP ribazoletransferase from Shewanella halifaxensis (strain HAW-EB4).